We begin with the raw amino-acid sequence, 301 residues long: dTDP-4-dehydrorhamnose reductase (301 aa).

NADH contacts are provided by residues 10 to 12, aspartate 30, 39 to 40, and 63 to 65; these read GQV, DF, and AHT. 11–12 is a binding site for NADPH; sequence QV. NADPH-binding positions include 39 to 40, 63 to 65, and tyrosine 102; these read DF and AHT. 104–105 is a binding site for dTDP-beta-L-rhamnose; that stretch reads TD. Tyrosine 129 and lysine 133 together coordinate NADH. Positions 129 and 133 each coordinate NADPH. Catalysis depends on tyrosine 129, which acts as the Proton donor/acceptor. DTDP-beta-L-rhamnose is bound at residue tryptophan 155.

The protein belongs to the dTDP-4-dehydrorhamnose reductase family. In terms of assembly, homodimer. The cofactor is Mg(2+).

The enzyme catalyses dTDP-beta-L-rhamnose + NADP(+) = dTDP-4-dehydro-beta-L-rhamnose + NADPH + H(+). The protein operates within carbohydrate biosynthesis; dTDP-L-rhamnose biosynthesis. It participates in bacterial outer membrane biogenesis; LPS O-antigen biosynthesis. Its function is as follows. Involved in the biosynthesis of the dTDP-L-rhamnose which is an important component of lipopolysaccharide (LPS). Catalyzes the reduction of dTDP-6-deoxy-L-lyxo-4-hexulose to yield dTDP-L-rhamnose. RmlD uses NADH and NADPH nearly equally well. In Escherichia coli, this protein is dTDP-4-dehydrorhamnose reductase.